The following is a 71-amino-acid chain: Large ribosomal subunit protein bL31 (71 aa).

Positions 16, 18, 37, and 40 each coordinate Zn(2+).

This sequence belongs to the bacterial ribosomal protein bL31 family. Type A subfamily. Part of the 50S ribosomal subunit. Zn(2+) is required as a cofactor.

Binds the 23S rRNA. This Solidesulfovibrio magneticus (strain ATCC 700980 / DSM 13731 / RS-1) (Desulfovibrio magneticus) protein is Large ribosomal subunit protein bL31.